The chain runs to 485 residues: Aspartyl/glutamyl-tRNA(Asn/Gln) amidotransferase subunit B (485 aa).

It belongs to the GatB/GatE family. GatB subfamily. Heterotrimer of A, B and C subunits.

The catalysed reaction is L-glutamyl-tRNA(Gln) + L-glutamine + ATP + H2O = L-glutaminyl-tRNA(Gln) + L-glutamate + ADP + phosphate + H(+). It catalyses the reaction L-aspartyl-tRNA(Asn) + L-glutamine + ATP + H2O = L-asparaginyl-tRNA(Asn) + L-glutamate + ADP + phosphate + 2 H(+). Its function is as follows. Allows the formation of correctly charged Asn-tRNA(Asn) or Gln-tRNA(Gln) through the transamidation of misacylated Asp-tRNA(Asn) or Glu-tRNA(Gln) in organisms which lack either or both of asparaginyl-tRNA or glutaminyl-tRNA synthetases. The reaction takes place in the presence of glutamine and ATP through an activated phospho-Asp-tRNA(Asn) or phospho-Glu-tRNA(Gln). This Borreliella afzelii (strain PKo) (Borrelia afzelii) protein is Aspartyl/glutamyl-tRNA(Asn/Gln) amidotransferase subunit B.